Reading from the N-terminus, the 348-residue chain is tRNA N6-adenosine threonylcarbamoyltransferase (348 aa).

The Fe cation site is built by histidine 115 and histidine 119. Substrate contacts are provided by residues 138-142, aspartate 171, glycine 184, and asparagine 276; that span reads LVSGG. Aspartate 304 is a Fe cation binding site.

The protein belongs to the KAE1 / TsaD family. Fe(2+) is required as a cofactor.

Its subcellular location is the cytoplasm. The enzyme catalyses L-threonylcarbamoyladenylate + adenosine(37) in tRNA = N(6)-L-threonylcarbamoyladenosine(37) in tRNA + AMP + H(+). Functionally, required for the formation of a threonylcarbamoyl group on adenosine at position 37 (t(6)A37) in tRNAs that read codons beginning with adenine. Is involved in the transfer of the threonylcarbamoyl moiety of threonylcarbamoyl-AMP (TC-AMP) to the N6 group of A37, together with TsaE and TsaB. TsaD likely plays a direct catalytic role in this reaction. The sequence is that of tRNA N6-adenosine threonylcarbamoyltransferase from Xylella fastidiosa (strain M23).